The chain runs to 163 residues: Photosystem II extrinsic protein V (163 aa).

The first 26 residues, methionine 1 to alanine 26, serve as a signal peptide directing secretion. 4 residues coordinate heme c: cysteine 63, cysteine 66, histidine 67, and histidine 118.

Belongs to the cytochrome c family. PsbV subfamily. PSII is composed of 1 copy each of membrane proteins PsbA, PsbB, PsbC, PsbD, PsbE, PsbF, PsbH, PsbI, PsbJ, PsbK, PsbL, PsbM, PsbT, PsbY, PsbZ, Psb30/Ycf12, at least 3 peripheral proteins of the oxygen-evolving complex and a large number of cofactors. It forms dimeric complexes. The extrinsic subunits in red algae are PsbO (OEC33), PsbQ', cytochrome c-550 and PsbU. The cofactor is heme c.

It is found in the plastid. The protein resides in the chloroplast thylakoid membrane. One of the extrinsic, lumenal subunits of photosystem II (PSII). PSII is a light-driven water plastoquinone oxidoreductase, using light energy to abstract electrons from H(2)O, generating a proton gradient subsequently used for ATP formation. The extrinsic proteins stabilize the structure of photosystem II oxygen-evolving complex (OEC), the ion environment of oxygen evolution and protect the OEC against heat-induced inactivation. This is Photosystem II extrinsic protein V from Porphyra purpurea (Red seaweed).